We begin with the raw amino-acid sequence, 953 residues long: Isoleucine--tRNA ligase (953 aa).

Positions 58–68 (PYANGFIHLGH) match the 'HIGH' region motif. Glu573 is an L-isoleucyl-5'-AMP binding site. The 'KMSKS' region motif lies at 614-618 (KMSKS). An ATP-binding site is contributed by Lys617. Positions 916, 919, 936, and 939 each coordinate Zn(2+).

The protein belongs to the class-I aminoacyl-tRNA synthetase family. IleS type 1 subfamily. As to quaternary structure, monomer. Zn(2+) is required as a cofactor.

It localises to the cytoplasm. The catalysed reaction is tRNA(Ile) + L-isoleucine + ATP = L-isoleucyl-tRNA(Ile) + AMP + diphosphate. Its function is as follows. Catalyzes the attachment of isoleucine to tRNA(Ile). As IleRS can inadvertently accommodate and process structurally similar amino acids such as valine, to avoid such errors it has two additional distinct tRNA(Ile)-dependent editing activities. One activity is designated as 'pretransfer' editing and involves the hydrolysis of activated Val-AMP. The other activity is designated 'posttransfer' editing and involves deacylation of mischarged Val-tRNA(Ile). This chain is Isoleucine--tRNA ligase, found in Blochmanniella floridana.